We begin with the raw amino-acid sequence, 300 residues long: Tetrahydromethanopterin S-methyltransferase subunit E (300 aa).

Transmembrane regions (helical) follow at residues 62-82 (PVSYGLYVAAAGATAWALMGM), 86-106 (PILAIIVGSAVAALVHGAYSV), 135-155 (PIVGHGFIAVFCMLFAAYLAV), 158-178 (LGNPFPLPLVALIFGITVGAI), 226-246 (YFCSKLGGPLTGLAFGLIIFL), and 261-281 (LITKAAIAIVVGLIVVITTLL).

The protein belongs to the MtrE family. As to quaternary structure, the complex is composed of 8 subunits; MtrA, MtrB, MtrC, MtrD, MtrE, MtrF, MtrG and MtrH.

The protein resides in the cell membrane. The catalysed reaction is 5-methyl-5,6,7,8-tetrahydromethanopterin + coenzyme M + 2 Na(+)(in) = 5,6,7,8-tetrahydromethanopterin + methyl-coenzyme M + 2 Na(+)(out). The protein operates within one-carbon metabolism; methanogenesis from CO(2); methyl-coenzyme M from 5,10-methylene-5,6,7,8-tetrahydromethanopterin: step 2/2. In terms of biological role, part of a complex that catalyzes the formation of methyl-coenzyme M and tetrahydromethanopterin from coenzyme M and methyl-tetrahydromethanopterin. This is an energy-conserving, sodium-ion translocating step. The protein is Tetrahydromethanopterin S-methyltransferase subunit E of Methanococcus aeolicus (strain ATCC BAA-1280 / DSM 17508 / OCM 812 / Nankai-3).